A 601-amino-acid chain; its full sequence is Elongation factor 4 (601 aa).

In terms of domain architecture, tr-type G spans 5–187 (DKIRNFSIIA…SIVKDLPAPQ (183 aa)). Residues 17-22 (DHGKST) and 134-137 (NKVD) each bind GTP.

It belongs to the TRAFAC class translation factor GTPase superfamily. Classic translation factor GTPase family. LepA subfamily.

The protein localises to the cell inner membrane. The catalysed reaction is GTP + H2O = GDP + phosphate + H(+). Required for accurate and efficient protein synthesis under certain stress conditions. May act as a fidelity factor of the translation reaction, by catalyzing a one-codon backward translocation of tRNAs on improperly translocated ribosomes. Back-translocation proceeds from a post-translocation (POST) complex to a pre-translocation (PRE) complex, thus giving elongation factor G a second chance to translocate the tRNAs correctly. Binds to ribosomes in a GTP-dependent manner. The chain is Elongation factor 4 from Maridesulfovibrio salexigens (strain ATCC 14822 / DSM 2638 / NCIMB 8403 / VKM B-1763) (Desulfovibrio salexigens).